The primary structure comprises 151 residues: Transcriptional repressor NrdR (151 aa).

A zinc finger lies at 3–34 (CPYCAYGESKVVDSRSTEDGSSIRRRRECLKC). One can recognise an ATP-cone domain in the interval 49–139 (ILVIKKNMSR…VYRQFKDINT (91 aa)).

It belongs to the NrdR family. Zn(2+) is required as a cofactor.

Functionally, negatively regulates transcription of bacterial ribonucleotide reductase nrd genes and operons by binding to NrdR-boxes. The chain is Transcriptional repressor NrdR from Clostridium botulinum (strain Loch Maree / Type A3).